Here is a 257-residue protein sequence, read N- to C-terminus: 3-oxo-5-alpha-steroid 4-dehydrogenase 1 (257 aa).

The next 6 helical transmembrane spans lie at 7–27 (FLLD…YVLL), 50–70 (AAWT…CAGA), 84–104 (ILLA…PFLI), 109–129 (PMPL…GYLQ), 149–169 (FLTG…SDHV), and 208–228 (ALAS…CVLF).

Belongs to the steroid 5-alpha reductase family.

It localises to the microsome membrane. Its subcellular location is the endoplasmic reticulum membrane. It carries out the reaction a 3-oxo-5alpha-steroid + NADP(+) = a 3-oxo-Delta(4)-steroid + NADPH + H(+). It catalyses the reaction 5alpha-pregnane-3,20-dione + NADP(+) = progesterone + NADPH + H(+). The enzyme catalyses 17beta-hydroxy-5alpha-androstan-3-one + NADP(+) = testosterone + NADPH + H(+). The catalysed reaction is androst-4-ene-3,17-dione + NADPH + H(+) = 5alpha-androstan-3,17-dione + NADP(+). Converts testosterone into 5-alpha-dihydrotestosterone and progesterone or corticosterone into their corresponding 5-alpha-3-oxosteroids. It plays a central role in sexual differentiation and androgen physiology. This chain is 3-oxo-5-alpha-steroid 4-dehydrogenase 1 (SRD5A1), found in Bos taurus (Bovine).